A 317-amino-acid polypeptide reads, in one-letter code: Transaldolase (317 aa).

The active-site Schiff-base intermediate with substrate is K132.

This sequence belongs to the transaldolase family. Type 1 subfamily. Homodimer.

It localises to the cytoplasm. The enzyme catalyses D-sedoheptulose 7-phosphate + D-glyceraldehyde 3-phosphate = D-erythrose 4-phosphate + beta-D-fructose 6-phosphate. Its pathway is carbohydrate degradation; pentose phosphate pathway; D-glyceraldehyde 3-phosphate and beta-D-fructose 6-phosphate from D-ribose 5-phosphate and D-xylulose 5-phosphate (non-oxidative stage): step 2/3. Its function is as follows. Transaldolase is important for the balance of metabolites in the pentose-phosphate pathway. This is Transaldolase from Photorhabdus laumondii subsp. laumondii (strain DSM 15139 / CIP 105565 / TT01) (Photorhabdus luminescens subsp. laumondii).